A 325-amino-acid chain; its full sequence is tRNA-dihydrouridine(16) synthase (325 aa).

Residues 12 to 14 and glutamine 73 contribute to the FMN site; that span reads PMQ. Cysteine 103 functions as the Proton donor in the catalytic mechanism. Residues lysine 144, 205-207, and 229-230 contribute to the FMN site; these read NGE and GR.

The protein belongs to the Dus family. DusC subfamily. Requires FMN as cofactor.

It catalyses the reaction 5,6-dihydrouridine(16) in tRNA + NADP(+) = uridine(16) in tRNA + NADPH + H(+). The enzyme catalyses 5,6-dihydrouridine(16) in tRNA + NAD(+) = uridine(16) in tRNA + NADH + H(+). In terms of biological role, catalyzes the synthesis of 5,6-dihydrouridine (D), a modified base found in the D-loop of most tRNAs, via the reduction of the C5-C6 double bond in target uridines. Specifically modifies U16 in tRNAs. This Haemophilus ducreyi (strain 35000HP / ATCC 700724) protein is tRNA-dihydrouridine(16) synthase.